The primary structure comprises 656 residues: MQVPESSLAHLSEWQRDAFVLSSGTCLPQQKAEVYRAHLAQIQYAWANSEISEASAVHLFKKYAEKYSAIIDSDKLEIGLNNYADSILTLAKCQRNESDKWQSSLTTNNVLKLKSVQDMAVAGRRTQLSKSSADASVRVGNGINTSGYSAGLGNNVLRNSGYTVPHAALSDCQMPGGSANFLQKPKISAFTIANTTSVANTSSNTLINNSISMTSSLMQSNEDKDPASFSGHMFLPTTSVHSGKRKAYSALGNESSDIKPNPLVQRQLTNKEATCESGFKTAKEQLWVDQQKKYSNQPQRNPSPLYGGAKKSLGAARSRGLHGKFVPPVPRQEDVQDSNRKVYGQGNSEMNAPSDERLKNIEPKMIELIMSEIMDHGPPLNWDDIAGLEFAKTTIKEIVVWPMLRPDIFTGLRGPPKGILLFGPPGTGKTLIGKCIACQSGATFFSISASSLTSKWVGEGEKMVRALFTVARCHQPAVIFIDEIDSLLSQRGEGEHESSRRIKTEFLVQLDGATTSSDDRILVVGATNRPQEIDEAARRRLVKRLYIPLPEASARKQIVVSLMAKEHCSLAEQEVEAIVLQADGFSGADMTQLCREAALGPIRSIQLMDISTITPEQVRPIAYIDFQSAFLVVRPSVSQKDLELYENWNKTFGCGR.

The segment covering 293-302 has biased composition (polar residues); the sequence is KYSNQPQRNP. A disordered region spans residues 293–354; that stretch reads KYSNQPQRNP…QGNSEMNAPS (62 aa). The segment covering 331–340 has biased composition (basic and acidic residues); that stretch reads RQEDVQDSNR. Residues alanine 386 and 426–431 contribute to the ATP site; that span reads GTGKTL.

It belongs to the AAA ATPase family. In terms of assembly, hexamer. It depends on Mg(2+) as a cofactor.

The protein resides in the nucleus. It is found in the cytoplasm. Its subcellular location is the perinuclear region. It carries out the reaction ATP + H2O = ADP + phosphate + H(+). May be involved in DNA double-strand break (DBS) repair via homologous recombination (HR). May regulate osteoblast proliferation and differentiation. This is Fidgetin-like protein 1 (fignl1) from Xenopus tropicalis (Western clawed frog).